Here is a 510-residue protein sequence, read N- to C-terminus: Bifunctional pantoate ligase/cytidylate kinase (510 aa).

The segment at 1-276 (MKKVIIRKTE…CGETRLIDHV (276 aa)) is pantoate--beta-alanine ligase. Residue 29–36 (MGNLHNGH) participates in ATP binding. Residue His36 is the Proton donor of the active site. Gln61 lines the (R)-pantoate pocket. Gln61 serves as a coordination point for beta-alanine. An ATP-binding site is contributed by 150–153 (GEKD). Gln156 contributes to the (R)-pantoate binding site. 187–190 (LSSR) is an ATP binding site. The tract at residues 277–510 (FLMKRRPIIA…DKIPKETEIK (234 aa)) is cytidylate kinase.

This sequence in the N-terminal section; belongs to the pantothenate synthetase family. It in the C-terminal section; belongs to the cytidylate kinase family. Type 1 subfamily.

The protein resides in the cytoplasm. The catalysed reaction is (R)-pantoate + beta-alanine + ATP = (R)-pantothenate + AMP + diphosphate + H(+). It carries out the reaction CMP + ATP = CDP + ADP. It catalyses the reaction dCMP + ATP = dCDP + ADP. The protein operates within cofactor biosynthesis; (R)-pantothenate biosynthesis; (R)-pantothenate from (R)-pantoate and beta-alanine: step 1/1. In terms of biological role, catalyzes the condensation of pantoate with beta-alanine in an ATP-dependent reaction via a pantoyl-adenylate intermediate. Catalyzes the transfer of a phosphate group from ATP to either CMP or dCMP to form CDP or dCDP and ADP, respectively. This Prochlorococcus marinus (strain MIT 9215) protein is Bifunctional pantoate ligase/cytidylate kinase.